The chain runs to 367 residues: Germination protease (367 aa).

Positions 1 to 15 (MKEPLDLSKYSVRTD) are excised as a propeptide.

It belongs to the peptidase A25 family. Homotetramer. Autoproteolytically processed. The inactive tetrameric zymogen termed p46 autoprocesses to a smaller form termed p41, which is active only during spore germination.

The catalysed reaction is Endopeptidase action with P4 Glu or Asp, P1 preferably Glu &gt; Asp, P1' hydrophobic and P2' Ala.. In terms of biological role, initiates the rapid degradation of small, acid-soluble proteins during spore germination. This chain is Germination protease, found in Bacillus thuringiensis subsp. konkukian (strain 97-27).